Reading from the N-terminus, the 406-residue chain is Nuclear hormone receptor family member nhr-133 (406 aa).

Positions 8 to 83 (SGPCEICEQP…VGMNSSKFQN (76 aa)) form a DNA-binding region, nuclear receptor. Residues 11–31 (CEICEQPAHGNHFGVLSCRAC) form an NR C4-type zinc finger. The NR C4-type; degenerate zinc-finger motif lies at 47-66 (DRVCRKGNCIGNDLYRCKIC). Positions 150–406 (YSWSPNHYPN…YSHPEMFEFS (257 aa)) constitute an NR LBD domain.

It belongs to the nuclear hormone receptor family.

Its subcellular location is the nucleus. In terms of biological role, orphan nuclear receptor. In Caenorhabditis elegans, this protein is Nuclear hormone receptor family member nhr-133.